The sequence spans 115 residues: ATP synthase subunit g, mitochondrial (115 aa).

The residue at position 1 (methionine 1) is an N-acetylmethionine. 2 positions are modified to phosphoserine: serine 3 and serine 62.

The protein belongs to the ATPase g subunit family. As to quaternary structure, F-type ATPases have 2 components, CF(1) - the catalytic core - and CF(0) - the membrane proton channel. In yeast, the dimeric form of ATP synthase consists of 17 polypeptides: alpha, beta, gamma, delta, epsilon, 4 (B), 5 (OSCP), 6 (A), 8, 9 (C), d, E (Tim11), f, g, h, i/j and k. Phosphorylation on Ser-62 impairs ATP synthase dimerization.

It is found in the mitochondrion membrane. Functionally, mitochondrial membrane ATP synthase (F(1)F(0) ATP synthase or Complex V) produces ATP from ADP in the presence of a proton gradient across the membrane which is generated by electron transport complexes of the respiratory chain. F-type ATPases consist of two structural domains, F(1) - containing the extramembraneous catalytic core, and F(0) - containing the membrane proton channel, linked together by a central stalk and a peripheral stalk. During catalysis, ATP synthesis in the catalytic domain of F(1) is coupled via a rotary mechanism of the central stalk subunits to proton translocation. Part of the complex F(0) domain. Minor subunit located with subunit a in the membrane. The chain is ATP synthase subunit g, mitochondrial (ATP20) from Saccharomyces cerevisiae (strain ATCC 204508 / S288c) (Baker's yeast).